We begin with the raw amino-acid sequence, 248 residues long: Adenosylcobinamide-GDP ribazoletransferase (248 aa).

The next 6 helical transmembrane spans lie at 36 to 56 (FFLP…YLGL), 59 to 79 (FLPS…ITGG), 114 to 134 (GTIA…SLVL), 137 to 157 (YSIA…FLCL), 170 to 190 (IFIG…VLVL), and 199 to 219 (ATII…LLCL).

Belongs to the CobS family. The cofactor is Mg(2+).

The protein localises to the cell membrane. The enzyme catalyses alpha-ribazole + adenosylcob(III)inamide-GDP = adenosylcob(III)alamin + GMP + H(+). It catalyses the reaction alpha-ribazole 5'-phosphate + adenosylcob(III)inamide-GDP = adenosylcob(III)alamin 5'-phosphate + GMP + H(+). The protein operates within cofactor biosynthesis; adenosylcobalamin biosynthesis; adenosylcobalamin from cob(II)yrinate a,c-diamide: step 7/7. In terms of biological role, joins adenosylcobinamide-GDP and alpha-ribazole to generate adenosylcobalamin (Ado-cobalamin). Also synthesizes adenosylcobalamin 5'-phosphate from adenosylcobinamide-GDP and alpha-ribazole 5'-phosphate. This is Adenosylcobinamide-GDP ribazoletransferase from Clostridium botulinum (strain Loch Maree / Type A3).